The sequence spans 148 residues: SUMO-conjugating enzyme UBC9 (148 aa).

In terms of domain architecture, UBC core spans 1–147; that stretch reads MASKRILKEL…ARTWTQKYAM (147 aa). Cys-85 serves as the catalytic Glycyl thioester intermediate.

Belongs to the ubiquitin-conjugating enzyme family. As to quaternary structure, interacts with CHIP. In terms of tissue distribution, highest expression in young stems and old leaves. Lowest levels in floral buds, anthers and young leaves.

Its pathway is protein modification; protein sumoylation. Accepts the ubiquitin-like protein SUMO/SMT3 from the E1 complex and catalyzes its covalent attachment to other proteins. Mediates the selective degradation of short-lived and abnormal proteins. The chain is SUMO-conjugating enzyme UBC9 (UBC9) from Arabidopsis thaliana (Mouse-ear cress).